A 164-amino-acid chain; its full sequence is Protein-export protein SecB (164 aa).

It belongs to the SecB family. As to quaternary structure, homotetramer, a dimer of dimers. One homotetramer interacts with 1 SecA dimer.

The protein resides in the cytoplasm. One of the proteins required for the normal export of preproteins out of the cell cytoplasm. It is a molecular chaperone that binds to a subset of precursor proteins, maintaining them in a translocation-competent state. It also specifically binds to its receptor SecA. The protein is Protein-export protein SecB of Pseudomonas syringae pv. tomato (strain ATCC BAA-871 / DC3000).